The sequence spans 130 residues: uncharacterized protein (130 aa).

The next 3 helical transmembrane spans lie at 34-54 (AILIIAFGAGIIYIVPYFAFF), 73-93 (LLLTAYGIVSLLFYIPGGWLA), and 107-127 (FGTGIITFWYFLVGLKGIVWI).

It is found in the cell membrane. This is an uncharacterized protein from Mycoplasma pneumoniae (strain ATCC 29342 / M129 / Subtype 1) (Mycoplasmoides pneumoniae).